Consider the following 545-residue polypeptide: Baeyer-Villiger monooxygenase (545 aa).

6 residues coordinate FAD: phenylalanine 24, aspartate 45, tryptophan 54, aspartate 65, tyrosine 71, and valine 118.

Belongs to the FAD-binding monooxygenase family. FAD is required as a cofactor.

Catalyzes a Baeyer-Villiger oxidation reaction, i.e. the insertion of an oxygen atom into a carbon-carbon bond adjacent to a carbonyl, which converts ketones to esters or lactones using NADPH as an electron donor. Besides cycloalkanones, can use cyclic alpha,beta-unsaturated ketones as substrates, leading to conjugated ene-lactones. Can also act on methylated cycloalkanones and methylated cycloalkenones with high enantioselectivity in some cases. In Pseudooceanicola batsensis (strain ATCC BAA-863 / DSM 15984 / KCTC 12145 / HTCC2597) (Oceanicola batsensis), this protein is Baeyer-Villiger monooxygenase.